Reading from the N-terminus, the 359-residue chain is MAIQNGLRNRILFLVIFMKFYNREKELNYLKNYVQLEPNSILFVYGPKSSGKSTVMLRVIEELSKKDDLVFFYYDLREYATPTKEEFLEIFFEKGDKKYLLNRFEINLKIFKFGIEEKFDFDNIKLNDVFSKMKESINAVIKDGKKPILIIDELQKLKSIYFNGEGKGDKSLLNELFNLFVHLTKVRHLCHVICLTSDTLFIEEIYRNSTLENTSEYYLIDWLRKESIRNILKEEGFSEEEVDYCLKYLSLPYEISQLINNKKLGLSVEQTIKQWINIERDKILYLISTQKEFEMGKLIDALKLFENKIKVDIKEIIRDNLMDEVKFLIKNEILFYDVMNGIIKPTSVKKWYAIKEVIE.

46–53 (GPKSSGKS) serves as a coordination point for ATP.

It belongs to the archaeal ATPase family.

This is an uncharacterized protein from Methanocaldococcus jannaschii (strain ATCC 43067 / DSM 2661 / JAL-1 / JCM 10045 / NBRC 100440) (Methanococcus jannaschii).